Consider the following 81-residue polypeptide: Conotoxin Vc6.13 (81 aa).

Positions 1-19 (MEKLTILLLVAAVLMSIQA) are cleaved as a signal peptide. The propeptide occupies 20-44 (LNQEQHQRAKINLLSKRKAPAERWW). Intrachain disulfides connect cysteine 49–cysteine 63, cysteine 56–cysteine 67, and cysteine 62–cysteine 72.

This sequence belongs to the conotoxin O2 superfamily. In terms of tissue distribution, expressed by the venom duct.

It localises to the secreted. Its function is as follows. Inhibits voltage-gated ion channels. The protein is Conotoxin Vc6.13 of Conus victoriae (Queen Victoria cone).